We begin with the raw amino-acid sequence, 336 residues long: Tetraacyldisaccharide 4'-kinase (336 aa).

T60–T67 is an ATP binding site.

It belongs to the LpxK family.

The catalysed reaction is a lipid A disaccharide + ATP = a lipid IVA + ADP + H(+). Its pathway is glycolipid biosynthesis; lipid IV(A) biosynthesis; lipid IV(A) from (3R)-3-hydroxytetradecanoyl-[acyl-carrier-protein] and UDP-N-acetyl-alpha-D-glucosamine: step 6/6. Transfers the gamma-phosphate of ATP to the 4'-position of a tetraacyldisaccharide 1-phosphate intermediate (termed DS-1-P) to form tetraacyldisaccharide 1,4'-bis-phosphate (lipid IVA). The protein is Tetraacyldisaccharide 4'-kinase of Pseudomonas fluorescens (strain Pf0-1).